A 488-amino-acid polypeptide reads, in one-letter code: Intron-encoded DNA endonuclease I-AniI (488 aa).

The interval 1-169 (MRILKSHPLL…DIVEFIWGGL (169 aa)) is cobA exon 1 encoded. The segment at 170 to 488 (YTDEPQCGDV…SEKIKIPSNY (319 aa)) is cobA intron encoded.

It in the C-terminal section; belongs to the LAGLIDADG endonuclease family. As to quaternary structure, homodimer. Mg(2+) is required as a cofactor. Post-translationally, the mature protein may arise from proteolytic cleavage of an in-frame translation of cobA exon 1 plus intron, containing the I-AniI open reading frame. Cleavage may take place close to Met-213 resulting in an active endonuclease/maturase of about 30 kDa.

The protein resides in the mitochondrion. Functionally, mitochondrial DNA endonuclease and mRNA maturase involved in intron homing and required for splicing of the cytochrome b (cobA) gene intron, containing its own coding sequence. The protein stimulates the intrinsic ribozyme activity of the intron through binding to and stabilizing specific secondary and tertiary structure elements in the RNA. As an endonuclease it introduces a specific double-strand break at the junction of the two exons the cobA gene and thus mediates the insertion of an intron, containing its own coding sequence (group I intron), into an intronless gene. Recognizes with limited specificity and cleaves the sequence 5'-GAGGAGGTTTCTCTGTA-3'. The proteins RNA and DNA recognition and binding surfaces are independent. This is Intron-encoded DNA endonuclease I-AniI (I-AniI) from Emericella nidulans (Aspergillus nidulans).